A 371-amino-acid chain; its full sequence is Protein lifeguard 1 (371 aa).

The tract at residues 1–145 (MSHEKSFLVS…EGPPSYYDNQ (145 aa)) is disordered. A compositionally biased stretch (pro residues) spans 14–49 (YPPPNPGYPGGPQPPMPPYAQPPYPGAPYPQPPFQP). Residues 84–98 (YPQEGYPQGPYPQGG) show a composition bias toward low complexity. The segment covering 102–114 (GPYPQSPFPPNPY) has biased composition (pro residues). 7 consecutive transmembrane segments (helical) span residues 165 to 185 (VFLV…VFTF), 197 to 217 (VWTY…LSCC), 228 to 248 (LVAL…IASF), 253 to 273 (AVIM…IFSM), 283 to 303 (MGVL…CIFI), 307 to 327 (ILEI…LAVD), and 346 to 366 (FAAL…LTII).

The protein belongs to the BI1 family. LFG subfamily.

It localises to the membrane. Potential apoptotic regulator. The protein is Protein lifeguard 1 (GRINA) of Homo sapiens (Human).